The chain runs to 316 residues: E3 ubiquitin-protein ligase rnf146 (316 aa).

The RING-type zinc finger occupies 36-74; sequence CAICLQTCVHPVSLPCKHIFCYLCVKGASWLGRRCALCR. A WWE domain is found at 91-167; the sequence is EELKSASRGN…EHGRRRKIKR (77 aa). Residues Y107, R110, W114, Y144, Q153, R163, and K175 each contribute to the a glycoprotein site. The interval 257-316 is disordered; that stretch reads GRNNIGEGEEGQPLINARMPAPSALLEESEPSDSNDHGSPTLQHNSLLVPQSNRLPFGNP. The segment covering 293 to 310 has biased composition (polar residues); the sequence is HGSPTLQHNSLLVPQSNR.

It localises to the cytoplasm. It is found in the cytosol. The protein resides in the nucleus. It carries out the reaction S-ubiquitinyl-[E2 ubiquitin-conjugating enzyme]-L-cysteine + [acceptor protein]-L-lysine = [E2 ubiquitin-conjugating enzyme]-L-cysteine + N(6)-ubiquitinyl-[acceptor protein]-L-lysine.. It functions in the pathway protein modification; protein ubiquitination. Its function is as follows. E3 ubiquitin-protein ligase that specifically binds poly-ADP-ribosylated proteins and mediates their ubiquitination and subsequent degradation. May regulate many important biological processes, such as cell survival and DNA damage response. Acts as an activator of the Wnt signaling pathway by mediating the ubiquitination of poly-ADP-ribosylated proteins. Neuroprotective protein. Protects against cell death induced by DNA damaging agents and rescues cells from G1 arrest. Promotes cell survival after gamma-irradiation. Facilitates DNA repair. In Xenopus tropicalis (Western clawed frog), this protein is E3 ubiquitin-protein ligase rnf146 (rnf146).